Here is a 73-residue protein sequence, read N- to C-terminus: Large ribosomal subunit protein bL31 (73 aa).

This sequence belongs to the bacterial ribosomal protein bL31 family. Type A subfamily. In terms of assembly, part of the 50S ribosomal subunit.

Binds the 23S rRNA. This chain is Large ribosomal subunit protein bL31 (rpmE), found in Roseobacter denitrificans (strain ATCC 33942 / OCh 114) (Erythrobacter sp. (strain OCh 114)).